The chain runs to 418 residues: Lactate dehydrogenase (NAD(+),ferredoxin) subunit LctC (418 aa).

Residues Arg-285, 325–328 (IGLS), 343–348 (SGAVQF), Asn-362, and 380–381 (DL) each bind FAD.

The protein belongs to the ETF alpha-subunit/FixB family. As to quaternary structure, part of the stable heterotrimeric lactate dehydrogenase-Etf complex, which is formed by the lactate dehydrogenase LctD and the electron-transferring flavoprotein (Etf) alpha (LctC) and beta (LctB) subunits. FAD is required as a cofactor. Requires [4Fe-4S] cluster as cofactor.

The protein localises to the cytoplasm. It carries out the reaction lactate + 2 reduced [2Fe-2S]-[ferredoxin] + 2 NAD(+) = 2 oxidized [2Fe-2S]-[ferredoxin] + pyruvate + 2 NADH. With respect to regulation, activity is stimulated by divalent cations. Highest stimulation is observed with Ca(2+). Functionally, the lactate dehydrogenase-Etf complex catalyzes the oxidation of lactate to pyruvate. It uses flavin-based electron confurcation to drive endergonic lactate oxidation with NAD(+) as oxidant at the expense of simultaneous exergonic electron flow from reduced ferredoxin to NAD(+). The electron transfer flavoprotein (Etf) mediates the electron transfer between the different donors and acceptors. This is Lactate dehydrogenase (NAD(+),ferredoxin) subunit LctC from Acetobacterium woodii (strain ATCC 29683 / DSM 1030 / JCM 2381 / KCTC 1655 / WB1).